Reading from the N-terminus, the 635-residue chain is MAKWTINDSSKIYNIDNWGAELFSINKKGNVCVHPSPNSKYSIDLKVLVDDLIKRKIKPPILLRFMNILEGRIASISRVFKNAISDNNYPAKYQTFYPIKVNQQRQVVEAIANFGKKYNIGLEVGSKPELVAAISMSTGNNLPILCNGYKDTEFIETVLFATRVGYDITIVVEKLFELEKIVEVSKRTGIVPKLGIRVKLSSKGIGKWSTSGGDDAKFGLRISELIAAIEMLKQNDMLDSVKLLHFHVGSQITKIDKIKNALIEGTRIYAEMRKLGVNLEFLDIGGGLGVDYDGSKSSYFSSVNYSLEEYANDVIYQVKNICDDAGVPCPNIISESGRATVAHYSVLVTDVLNNNTQTLMPDFESILTESEKLSPTVKKLVDIYKSIDKHSLREDYHDTIQLIQESVSLFNLGYLNMAERANAEWICSKIIRKINSIVEKMKPIPDELQNFQLSLRQTYFANFSLFQSIPDSWAIDQLFPIVPIQRLDEKPDVLTSIADITCDSDGEITSFVGENGRTKALPLHKIKVDEQYYIGFFLIGAYQEILGDMHNLFGDTNAVHITFNKKTNYKIDTVITGDATWESLKYVQYDSQEILKRVRNNLEKDVSLQKVSIEESSHFLELLDKTLQSYTYLGE.

Lys100 is modified (N6-(pyridoxal phosphate)lysine). 282–292 (LDIGGGLGVDY) serves as a coordination point for substrate.

It belongs to the Orn/Lys/Arg decarboxylase class-II family. SpeA subfamily. Mg(2+) serves as cofactor. Requires pyridoxal 5'-phosphate as cofactor.

It carries out the reaction L-arginine + H(+) = agmatine + CO2. It participates in amine and polyamine biosynthesis; agmatine biosynthesis; agmatine from L-arginine: step 1/1. Catalyzes the biosynthesis of agmatine from arginine. In Geobacter sp. (strain M21), this protein is Biosynthetic arginine decarboxylase.